The sequence spans 273 residues: Dermonecrotic toxin LdSicTox-alphaIB3ai (273 aa).

H5 is a catalytic residue. The Mg(2+) site is built by E25 and D27. Catalysis depends on H41, which acts as the Nucleophile. 2 disulfide bridges follow: C45–C51 and C47–C190. Position 85 (D85) interacts with Mg(2+).

This sequence belongs to the arthropod phospholipase D family. Class II subfamily. Requires Mg(2+) as cofactor. Expressed by the venom gland.

The protein localises to the secreted. It carries out the reaction an N-(acyl)-sphingosylphosphocholine = an N-(acyl)-sphingosyl-1,3-cyclic phosphate + choline. The catalysed reaction is an N-(acyl)-sphingosylphosphoethanolamine = an N-(acyl)-sphingosyl-1,3-cyclic phosphate + ethanolamine. The enzyme catalyses a 1-acyl-sn-glycero-3-phosphocholine = a 1-acyl-sn-glycero-2,3-cyclic phosphate + choline. It catalyses the reaction a 1-acyl-sn-glycero-3-phosphoethanolamine = a 1-acyl-sn-glycero-2,3-cyclic phosphate + ethanolamine. In terms of biological role, dermonecrotic toxins cleave the phosphodiester linkage between the phosphate and headgroup of certain phospholipids (sphingolipid and lysolipid substrates), forming an alcohol (often choline) and a cyclic phosphate. This toxin acts on sphingomyelin (SM). It may also act on ceramide phosphoethanolamine (CPE), lysophosphatidylcholine (LPC) and lysophosphatidylethanolamine (LPE), but not on lysophosphatidylserine (LPS), and lysophosphatidylglycerol (LPG). It acts by transphosphatidylation, releasing exclusively cyclic phosphate products as second products. Induces dermonecrosis, hemolysis, increased vascular permeability, edema, inflammatory response, and platelet aggregation. This Loxosceles deserta (Desert recluse spider) protein is Dermonecrotic toxin LdSicTox-alphaIB3ai.